A 187-amino-acid polypeptide reads, in one-letter code: Protein GrpE (187 aa).

Residues 1 to 11 show a composition bias toward basic and acidic residues; the sequence is MTDSSNEHETE. Positions 1 to 21 are disordered; sequence MTDSSNEHETENPSLPIPDNE.

It belongs to the GrpE family. In terms of assembly, homodimer.

Its subcellular location is the cytoplasm. In terms of biological role, participates actively in the response to hyperosmotic and heat shock by preventing the aggregation of stress-denatured proteins, in association with DnaK and GrpE. It is the nucleotide exchange factor for DnaK and may function as a thermosensor. Unfolded proteins bind initially to DnaJ; upon interaction with the DnaJ-bound protein, DnaK hydrolyzes its bound ATP, resulting in the formation of a stable complex. GrpE releases ADP from DnaK; ATP binding to DnaK triggers the release of the substrate protein, thus completing the reaction cycle. Several rounds of ATP-dependent interactions between DnaJ, DnaK and GrpE are required for fully efficient folding. The protein is Protein GrpE of Chlamydia caviae (strain ATCC VR-813 / DSM 19441 / 03DC25 / GPIC) (Chlamydophila caviae).